Consider the following 315-residue polypeptide: Secreted mono- and diacylglycerol lipase LIP2 (315 aa).

Residues 1 to 21 (MACFRVILYLSVIFFVQCVFA) form the signal peptide. Residues Cys-68 and Cys-308 are joined by a disulfide bond. N-linked (GlcNAc...) asparagine glycosylation occurs at Asn-74. The Nucleophile role is filled by Ser-182. Residue Asp-240 is part of the active site. N-linked (GlcNAc...) asparagine glycosylation is present at Asn-265. His-292 is an active-site residue.

This sequence belongs to the AB hydrolase superfamily. Lipase family. Class 3 subfamily.

It localises to the secreted. It catalyses the reaction a monoacylglycerol + H2O = glycerol + a fatty acid + H(+). The enzyme catalyses a diacylglycerol + H2O = a monoacylglycerol + a fatty acid + H(+). Secreted lipase involved in Dandruff and seborrheic dermatitis (D/SD) probably via lipase-mediated breakdown of sebaceous lipids and release of irritating free fatty acids. Shows activity against monoglyceride and diglyceride substrates and generates free oleic acid from the substrates mono- and diolein. Able to cleave the oleic acid from both the 1 and the 2 position of the glycerol backbone as 1,2 isomers of diolein were converted into oleic acid and glycerol. Due to an absence of fatty acid synthase genes in Malassezia species, secretory lipases are essential for the yeast to generate free fatty acids from degradation of sebum and assimilate them as lipid sources for growth. Plays an essential role at the pathogen-host interface during disease progression. Also performs the reverse reaction to build diacylglycerols from monoacylglycerols. This Malassezia restricta (strain ATCC 96810 / NBRC 103918 / CBS 7877) (Seborrheic dermatitis infection agent) protein is Secreted mono- and diacylglycerol lipase LIP2.